We begin with the raw amino-acid sequence, 170 residues long: Protein HemX (170 aa).

Positions 1–17 are enriched in polar residues; the sequence is MTEQKNTNENDLQNGTS. The tract at residues 1–24 is disordered; sequence MTEQKNTNENDLQNGTSKADDDIR. A helical membrane pass occupies residues 37 to 57; sequence GLIGSAVAILVILAIGGGLYY.

Its subcellular location is the cell membrane. This is Protein HemX from Proteus mirabilis.